Consider the following 295-residue polypeptide: MSITLSSRGRKIRKLPKSLEFPLDGSIDKLRDEVSSVTRLPVERLRFSTADGTTLLPNTTLRKYGVGPGATIWVKDLGPQIGWRTVFMIEYLGPLVIHLFFILNYKWIYRKDYNLCLNQKIAFVLVMLHFMKREYESIFVHRFSLATMPLRNIFKNCAHYHLLSGLFLAYFIYGPWHANDYIKPNHLLFLIVGWAFAVLSNFRTHIILRDLRPAGSKKRVIPTGYGFNLVSFPNYFFESLGWLFFALLTKSWASWIFLFVGSAQMFVWAKKKHARYLKEFPNYPRSRKIMIPFFL.

At 1–84 (MSITLSSRGR…KDLGPQIGWR (84 aa)) the chain is on the cytoplasmic side. A helical transmembrane segment spans residues 85 to 105 (TVFMIEYLGPLVIHLFFILNY). The Lumenal portion of the chain corresponds to 106–157 (KWIYRKDYNLCLNQKIAFVLVMLHFMKREYESIFVHRFSLATMPLRNIFKNC). The helical transmembrane segment at 158 to 178 (AHYHLLSGLFLAYFIYGPWHA) threads the bilayer. The Cytoplasmic segment spans residues 179-186 (NDYIKPNH). The chain crosses the membrane as a helical span at residues 187–207 (LLFLIVGWAFAVLSNFRTHII). The Lumenal portion of the chain corresponds to 208 to 223 (LRDLRPAGSKKRVIPT). A helical transmembrane segment spans residues 224–246 (GYGFNLVSFPNYFFESLGWLFFA). The Cytoplasmic segment spans residues 247-250 (LLTK). A helical transmembrane segment spans residues 251-268 (SWASWIFLFVGSAQMFVW). At 269–295 (AKKKHARYLKEFPNYPRSRKIMIPFFL) the chain is on the lumenal side.

The protein belongs to the steroid 5-alpha reductase family.

It localises to the endoplasmic reticulum membrane. The catalysed reaction is a (2E)-enoyl-CoA + NADPH + H(+) = a 2,3-saturated acyl-CoA + NADP(+). The polypeptide is Putative enoyl reductase C646.07c (Schizosaccharomyces pombe (strain 972 / ATCC 24843) (Fission yeast)).